The chain runs to 590 residues: MKKILAFFLVFALAGAVFADEPSAEAKIAEFKGDAAVTFGVDLDTNRTGFKNEVGGSIKLNLLNGGDKSTTGDGIWGELKLKINAFTLQAKADKNVNLLTKIDDDDVKVEIDTAKIHIGPAYVGIKKGDLNYGSNFWYPNALNYKDGDDEYYNRTPSDKVKYDQGLVLGYEQKDLFKVETAFRSQKDTGKKLDKVEGVILPKDTEIKKGEYFKSVEGAHDNAKTDDVFDDAALVDPIPGKTDVKKLKATXAVFKRVMKDGDTNYWTDKYALGVYGEVKPIKDLRVAIGTAYVFGRLSGDKDVLKAVGDSDNRGDITFFTGAXYKLSLLEKFVVNPVVTYTLYADAKWNGANEKLXYPEXLKTSMLKTGVRFGWGEXKKSNSLLYDFXGKNTLVYDTNKEDKGDDKLLPGVSLFGAFDLVNKNIETKLPLMXTFYSGELVKGLNVAALVHANVAKDASEISRVVPGTVYAGRMTKAXYERLIGAKGLQIGLAASYDVKLNDITIVPAAAMLWTHGMLKGEADTRMTADEFKVEAKVDVKGVIQNTTLSVFWDEAAFGKGTSKEWTFGVKHDEQNYYTLKNGVFGLKAKIAL.

The N-terminal stretch at 1-19 (MKKILAFFLVFALAGAVFA) is a signal peptide.

The protein resides in the cell outer membrane. In terms of biological role, major component of the outer membrane. In Treponema lecithinolyticum, this protein is Major surface protein MspTL (mspTL).